A 370-amino-acid polypeptide reads, in one-letter code: Chloromuconate cycloisomerase (370 aa).

Lys-165 functions as the Proton acceptor in the catalytic mechanism. Mn(2+) contacts are provided by Asp-194, Glu-220, and Asp-245. Glu-323 (proton donor) is an active-site residue.

It belongs to the mandelate racemase/muconate lactonizing enzyme family. The cofactor is Mn(2+).

It catalyses the reaction 2-[(2R)-2-chloro-2,5-dihydro-5-oxofuryl]acetate = 3-chloro-cis,cis-muconate + H(+). It functions in the pathway aromatic compound metabolism; 3-chlorocatechol degradation. This chain is Chloromuconate cycloisomerase (tfdD), found in Delftia acidovorans (Pseudomonas acidovorans).